The sequence spans 476 residues: uncharacterized protein (476 aa).

Residues 1-24 (MIRKSATGVIVALAVIWGGGTWYT) form the signal peptide.

To E.coli YdgA and H.influenzae HI_1236.

This is an uncharacterized protein from Escherichia coli (strain K12).